The sequence spans 361 residues: Palmitoyltransferase ZDHHC16 (361 aa).

Over 1 to 77 (MRGQRSLLLG…VYWLVDNVIR (77 aa)) the chain is Cytoplasmic. A helical transmembrane segment spans residues 78-98 (WFGVVFVVLVIVLTGSIVAIA). The Lumenal segment spans residues 99 to 116 (YLCVLPLILRTYSVPRLC). A helical membrane pass occupies residues 117–137 (WHFFYSHWNLILIVFHYYQAI). The Cytoplasmic segment spans residues 138 to 198 (TTPPGYPPQG…NNCVGHYNHR (61 aa)). In terms of domain architecture, DHHC spans 155 to 205 (SICKKCIYPKPARTHHCSICNRCVLKMDHHCPWLNNCVGHYNHRYFFSFCF). Cys185 serves as the catalytic S-palmitoyl cysteine intermediate. Residues 199 to 219 (YFFSFCFFMTLGCVYCSYGSW) traverse the membrane as a helical segment. The Lumenal portion of the chain corresponds to 220-250 (DLFREAYAAIETYHQTPPPTFSFRERITHKS). Residues 251–271 (LVYLWFLCSSVALALGALTMW) form a helical membrane-spanning segment. The Cytoplasmic segment spans residues 272–361 (HAVLISRGET…TAHSASVMAV (90 aa)).

This sequence belongs to the DHHC palmitoyltransferase family. As to quaternary structure, interacts with ABL1. Interacts with COPS5. In terms of tissue distribution, ubiquitously expressed.

Its subcellular location is the endoplasmic reticulum membrane. The catalysed reaction is L-cysteinyl-[protein] + hexadecanoyl-CoA = S-hexadecanoyl-L-cysteinyl-[protein] + CoA. Functionally, palmitoyl acyltransferase that mediates palmitoylation of proteins such as PLN and ZDHHC6. Required during embryonic heart development and cardiac function, possibly by mediating palmitoylation of PLN, thereby affecting PLN phosphorylation and homooligomerization. Also required for eye development. Palmitoylates ZDHHC6, affecting the quaternary assembly of ZDHHC6, its localization, stability and function. May play a role in DNA damage response. May be involved in apoptosis regulation. Involved in the proliferation of neural stem cells by regulating the FGF/ERK pathway. This chain is Palmitoyltransferase ZDHHC16, found in Mus musculus (Mouse).